The chain runs to 408 residues: Tripartite motif containing 13 (408 aa).

Residues 10–58 (CPICCSLFDDPRVLPCSHNFCKKCLDGVLEENSRTMQWRPSSFKCPTCR) form an RING-type zinc finger. A B box-type zinc finger spans residues 89–131 (PKMPVCKEHSDQPLNIFCSTDLKLICGSCATTGEHKKHVFSSI). The Zn(2+) site is built by Cys-94, His-97, Cys-117, and His-123. Residues 322–342 (ILVVACLILLLVTFLCAYPFI) traverse the membrane as a helical segment.

The protein resides in the endoplasmic reticulum membrane. The protein operates within protein modification; protein ubiquitination. Its function is as follows. E3 ubiquitin ligase involved in the retrotranslocation and turnover of membrane and secretory proteins from the ER through a set of processes named ER-associated degradation (ERAD). This process acts on misfolded proteins as well as in the regulated degradation of correctly folded proteins. This is Tripartite motif containing 13 (trim13) from Xenopus tropicalis (Western clawed frog).